Reading from the N-terminus, the 64-residue chain is MAGHKVAHATLKGPSVVKELFIGLALGLAAGGLWKMHHWNEQRKTRTFYDLLERGEISVVAAEE.

The helical transmembrane segment at 15-34 (SVVKELFIGLALGLAAGGLW) threads the bilayer.

This sequence belongs to the cytochrome c oxidase subunit 5C family.

It localises to the mitochondrion inner membrane. Its function is as follows. This protein is one of the nuclear-coded polypeptide chains of cytochrome c oxidase, the terminal oxidase in mitochondrial electron transport. This chain is Probable cytochrome c oxidase subunit 5C-1, found in Arabidopsis thaliana (Mouse-ear cress).